Reading from the N-terminus, the 957-residue chain is Thioredoxin domain-containing protein 11 (957 aa).

Residues 1 to 13 (MSECGGRGGGGGS) are compositionally biased toward gly residues. Residues 1 to 47 (MSECGGRGGGGGSSSSSDDAEDEGGGGGPAGSGSLSPAPAASSEGRL) form a disordered region. Low complexity predominate over residues 32–44 (SGSLSPAPAASSE). Residues 64-84 (LLCGAVALGCALLLALKFTCS) form a helical membrane-spanning segment. The region spanning 91 to 213 (IPAKPPVSFF…IEKFVRRVMK (123 aa)) is the Thioredoxin 1 domain. Cystine bridges form between cysteine 441/cysteine 444 and cysteine 691/cysteine 694. In terms of domain architecture, Thioredoxin 2 spans 621–771 (LDPKQALMKF…LLRFILHHSD (151 aa)). A coiled-coil region spans residues 785-889 (AECLQNEAVL…ADASETLLTE (105 aa)). The segment covering 904-925 (LEGRDGADDRVPPSKARSEHPE) has biased composition (basic and acidic residues). Residues 904-957 (LEGRDGADDRVPPSKARSEHPEPPGAPRLPASTPLPANISSTLASEGSPENRTD) are disordered. Residues 941-951 (NISSTLASEGS) are compositionally biased toward polar residues.

Belongs to the protein disulfide isomerase family. As to quaternary structure, interacts with the cytoplasmic part of DUOX1 and DUOX2. Interacts with TPO and CYBA.

It localises to the endoplasmic reticulum membrane. Functionally, may act as a redox regulator involved in DUOX proteins folding. The interaction with DUOX1 and DUOX2 suggest that it belongs to a multiprotein complex constituting the thyroid H(2)O(2) generating system. It is however not sufficient to assist DUOX1 and DUOX2 in H(2)O(2) generation. In Bos taurus (Bovine), this protein is Thioredoxin domain-containing protein 11 (TXNDC11).